The primary structure comprises 130 residues: Small ribosomal subunit protein uS8 (130 aa).

This sequence belongs to the universal ribosomal protein uS8 family. Part of the 30S ribosomal subunit.

Its function is as follows. One of the primary rRNA binding proteins, it binds directly to 16S rRNA central domain where it helps coordinate assembly of the platform of the 30S subunit. This is Small ribosomal subunit protein uS8 from Caldivirga maquilingensis (strain ATCC 700844 / DSM 13496 / JCM 10307 / IC-167).